We begin with the raw amino-acid sequence, 299 residues long: Tyrosine recombinase XerC (299 aa).

The Core-binding (CB) domain occupies 1 to 85 (MKRQLEAYCA…AVRGLYRYLN (85 aa)). In terms of domain architecture, Tyr recombinase spans 106-285 (RLPKVLDTDR…DFQHLAAVYD (180 aa)). Active-site residues include arginine 146, lysine 170, histidine 237, arginine 240, and histidine 263. Tyrosine 272 functions as the O-(3'-phospho-DNA)-tyrosine intermediate in the catalytic mechanism.

The protein belongs to the 'phage' integrase family. XerC subfamily. Forms a cyclic heterotetrameric complex composed of two molecules of XerC and two molecules of XerD.

The protein resides in the cytoplasm. In terms of biological role, site-specific tyrosine recombinase, which acts by catalyzing the cutting and rejoining of the recombining DNA molecules. The XerC-XerD complex is essential to convert dimers of the bacterial chromosome into monomers to permit their segregation at cell division. It also contributes to the segregational stability of plasmids. This is Tyrosine recombinase XerC from Pseudomonas putida (strain ATCC 47054 / DSM 6125 / CFBP 8728 / NCIMB 11950 / KT2440).